We begin with the raw amino-acid sequence, 198 residues long: Nicotinamidase 3 (198 aa).

This sequence belongs to the isochorismatase family.

It catalyses the reaction nicotinamide + H2O = nicotinate + NH4(+). The protein operates within cofactor biosynthesis; nicotinate biosynthesis; nicotinate from nicotinamide: step 1/1. Functionally, catalyzes the deamidation of nicotinamide, an early step in the NAD(+) salvage pathway. Prevents the accumulation of intracellular nicotinamide, a known inhibitor of poly(ADP-ribose) polymerases (PARP enzymes). The protein is Nicotinamidase 3 of Arabidopsis thaliana (Mouse-ear cress).